The sequence spans 1103 residues: PH, RCC1 and FYVE domains-containing protein 1 (1103 aa).

Residues 22-123 enclose the PH domain; the sequence is KKGTQLLKYG…IWIGGLKTLI (102 aa). Residues 144–233 form a disordered region; sequence DASRELTSSS…SSSHGSAADD (90 aa). Composition is skewed to low complexity over residues 151 to 169 and 217 to 231; these read SSSPSSSSASASRGHSSPG and SVSSAQSSSSHGSAA. RCC1 repeat units follow at residues 237–298, 299–351, 353–406, 407–458, 471–522, 524–574, and 575–626; these read LGDV…FVTR, QGEI…AVTL, GELY…LITS, YGRL…AVVE, SGKL…GLTT, GQVF…ALTS, and RNEV…AICL. An FYVE-type zinc finger spans residues 632 to 694; sequence GAEQSQCSTC…VCDSCYVKLS (63 aa). The Zn(2+) site is built by Cys638, Cys641, Cys654, Cys657, Cys662, Cys665, Cys686, and Cys689. The segment at 783-818 is disordered; sequence ATPKLAQAPSGISSRSVSPFSRRSSPPRSATPMPST. A compositionally biased stretch (low complexity) spans 791 to 818; sequence PSGISSRSVSPFSRRSSPPRSATPMPST. A coiled-coil region spans residues 828 to 904; sequence ADNMKKTNEI…IAQLKDVAEK (77 aa). A compositionally biased stretch (polar residues) spans 962–979; that stretch reads NLQSPKQTPRASERNSNA. The segment at 962–988 is disordered; the sequence is NLQSPKQTPRASERNSNAYPADPRLSS. Residues 1023 to 1078 form the BRX domain; sequence AEWIEQYEPGVYITLVALHDGTRDLRRVRFSRRRFGEHQAETWWSENREKVYEKYN. Residues 1079–1103 are disordered; it reads VRVSEKSTASQTHRDRDEEEEDIPH.

Mostly expressed in flowers, and, to a lower extent, in stems, leaves, siliques, seeds.

Its function is as follows. Binds to phosphatidic acid and to phosphoinositides such as PtdIns3P, PtdIns(3,4)P(2), PtdIns(3,4,5)P(3) and PtdIns(4,5)P(2). Catalyzes guanine nucleotide exchange on specific Rab proteins. The polypeptide is PH, RCC1 and FYVE domains-containing protein 1 (Arabidopsis thaliana (Mouse-ear cress)).